Consider the following 56-residue polypeptide: Small ribosomal subunit protein uS14 (56 aa).

Zn(2+) contacts are provided by cysteine 21, cysteine 24, cysteine 39, and cysteine 42.

It belongs to the universal ribosomal protein uS14 family. Requires Zn(2+) as cofactor.

In Candida glabrata (strain ATCC 2001 / BCRC 20586 / JCM 3761 / NBRC 0622 / NRRL Y-65 / CBS 138) (Yeast), this protein is Small ribosomal subunit protein uS14 (RPS29).